Here is an 891-residue protein sequence, read N- to C-terminus: 26S proteasome non-ATPase regulatory subunit 2 homolog A (891 aa).

A disordered region spans residues 1-44 (MAPTQDPNSVGGGAKKDEATLKVPSKDPKKKDEKKDEDLSEEDL). The Nuclear localization signal signature appears at 14–21 (AKKDEATL). Positions 14–37 (AKKDEATLKVPSKDPKKKDEKKDE) are enriched in basic and acidic residues. A Glycyl lysine isopeptide (Lys-Gly) (interchain with G-Cter in ubiquitin) cross-link involves residue lysine 218. Threonine 219 carries the O-acetylthreonine modification. PC repeat units lie at residues 414 to 447 (SAAA…PIIA), 448 to 484 (GALL…SVRI), 485 to 519 (GAIM…PLDV), 522 to 556 (FASL…AELG), 565 to 594 (LGLG…KIRK), 674 to 705 (LALG…EVAM), and 724 to 739 (AGML…KDMS).

Belongs to the proteasome subunit S2 family. As to quaternary structure, component of the 19S regulatory particle (RP/PA700) base subcomplex of the 26S proteasome. The 26S proteasome is composed of a core protease (CP), known as the 20S proteasome, capped at one or both ends by the 19S regulatory particle (RP/PA700). The RP/PA700 complex is composed of at least 17 different subunits in two subcomplexes, the base and the lid, which form the portions proximal and distal to the 20S proteolytic core, respectively. Interacts with JMJ27. In terms of tissue distribution, expressed in stems, leaves, buds, flowers, siliques and developing seeds.

Its subcellular location is the nucleus. The protein resides in the cytoplasm. Its function is as follows. Acts as a regulatory subunit of the 26 proteasome which is involved in the ATP-dependent degradation of ubiquitinated proteins. Required during embryogenesis. Required for optimal plant growth and stress responses. Required for innate immunity. Prevents JMJ27 accumulation in non-drought conditions. This is 26S proteasome non-ATPase regulatory subunit 2 homolog A from Arabidopsis thaliana (Mouse-ear cress).